Consider the following 441-residue polypeptide: Ribosomal protein uS12 methylthiotransferase RimO (441 aa).

One can recognise an MTTase N-terminal domain in the interval 8–118; it reads PKIGFVSLGC…VLEHVHHYVP (111 aa). Positions 17, 53, 82, 150, 154, and 157 each coordinate [4Fe-4S] cluster. Positions 136-373 constitute a Radical SAM core domain; sequence LTPRHYAYLK…MQLQQQISAE (238 aa). The region spanning 376 to 441 is the TRAM domain; sequence QEKVGKEILV…DEYDLWGSRV (66 aa).

The protein belongs to the methylthiotransferase family. RimO subfamily. The cofactor is [4Fe-4S] cluster.

The protein localises to the cytoplasm. It carries out the reaction L-aspartate(89)-[ribosomal protein uS12]-hydrogen + (sulfur carrier)-SH + AH2 + 2 S-adenosyl-L-methionine = 3-methylsulfanyl-L-aspartate(89)-[ribosomal protein uS12]-hydrogen + (sulfur carrier)-H + 5'-deoxyadenosine + L-methionine + A + S-adenosyl-L-homocysteine + 2 H(+). Functionally, catalyzes the methylthiolation of an aspartic acid residue of ribosomal protein uS12. The protein is Ribosomal protein uS12 methylthiotransferase RimO of Escherichia fergusonii (strain ATCC 35469 / DSM 13698 / CCUG 18766 / IAM 14443 / JCM 21226 / LMG 7866 / NBRC 102419 / NCTC 12128 / CDC 0568-73).